A 71-amino-acid chain; its full sequence is MELPYTNLEMAFILLAFVIFSLFTLASIYTTPDDSNEEEEHEKKGREKKRKKSEKKKNCSEEEHRIEAVEL.

The helical transmembrane segment at 8–28 threads the bilayer; that stretch reads LEMAFILLAFVIFSLFTLASI. The tract at residues 31-71 is disordered; it reads TPDDSNEEEEHEKKGREKKRKKSEKKKNCSEEEHRIEAVEL. Positions 46 to 55 are enriched in basic residues; that stretch reads REKKRKKSEK. A compositionally biased stretch (basic and acidic residues) spans 56–71; the sequence is KKNCSEEEHRIEAVEL. A glycan (N-linked (GlcNAc...) asparagine) is linked at Asn-58.

It localises to the membrane. This is Small integral membrane protein 31 from Homo sapiens (Human).